The following is a 190-amino-acid chain: MQLLVRVPSLPERGELDCNICYRPFNLGCRAPRRLPGTARARCGHTICTACLRELAARGDGGGAAARVVRLRRVVTCPFCRAPSQLPRGGLTEMALDSDLWSRLEEKARAKCERDEAGNPAKESSDADGEAEEEGESEKGAGPRSAGWRALRRLWDRVLGPARRWRRPLPSNVLYCAEIKDIGHLTRCTL.

The RING-type zinc finger occupies 18–81; it reads CNICYRPFNL…RRVVTCPFCR (64 aa). The interval 111 to 145 is disordered; that stretch reads KCERDEAGNPAKESSDADGEAEEEGESEKGAGPRS. Residues 126 to 136 show a composition bias toward acidic residues; it reads DADGEAEEEGE.

The chain is RING finger protein 227 from Homo sapiens (Human).